The primary structure comprises 940 residues: Lon protease homolog 1, mitochondrial (940 aa).

Residues M1–G61 constitute a mitochondrion transit peptide. The disordered stretch occupies residues K70–T90. At S74 the chain carries Phosphoserine. In terms of domain architecture, Lon N-terminal spans V100–M309. G464–T471 contributes to the ATP binding site. Positions Q751–Y935 constitute a Lon proteolytic domain. Residues S841 and K884 contribute to the active site.

The protein belongs to the peptidase S16 family. As to quaternary structure, homohexamer or homoheptamer. Organized in a ring with a central cavity.

The protein localises to the mitochondrion matrix. It carries out the reaction Hydrolysis of proteins in presence of ATP.. ATP-dependent serine protease that mediates the selective degradation of misfolded, unassembled or oxidatively damaged polypeptides as well as certain short-lived regulatory proteins in the mitochondrial matrix. May also have a chaperone function in the assembly of inner membrane protein complexes. Participates in the regulation of mitochondrial gene expression and in the maintenance of the integrity of the mitochondrial genome. Binds to mitochondrial DNA in a site-specific manner. The protein is Lon protease homolog 1, mitochondrial (LON1) of Arabidopsis thaliana (Mouse-ear cress).